Reading from the N-terminus, the 426-residue chain is Oligouridylate-binding protein 1A (426 aa).

Residues 1–26 are disordered; it reads MQNQRLIKQQQQQQQQQHQQAMIQQA. Residues 9–26 show a composition bias toward low complexity; it reads QQQQQQQQQHQQAMIQQA. 2 RRM domains span residues 63 to 137 and 148 to 226; these read RSVY…WAYA and FNIF…WATK. Residues 230 to 268 form a disordered region; it reads FGEDKHSSDGKSVVELTNGSSEDGRELSNEDAPENNPQF. Ser-250 bears the Phosphoserine mark. The 76-residue stretch at 269 to 344 folds into the RRM 3 domain; sequence TTVYVGNLSP…RQIRCSWGNK (76 aa).

As to quaternary structure, interacts with UBA1A and UBA2A.

Its subcellular location is the nucleus. In terms of biological role, heterogeneous nuclear ribonucleoprotein (hnRNP)-like protein that acts as a component of the pre-mRNA processing machinery. Functions to facilitate the nuclear maturation of plant pre-mRNAs. The polypeptide is Oligouridylate-binding protein 1A (UBP1A) (Arabidopsis thaliana (Mouse-ear cress)).